Here is a 360-residue protein sequence, read N- to C-terminus: MKNTALTNIHESLGAKMVPFAGYNMPVQYEGVNAEHEIVRTGVGVFDVSHMGEFFLKGENALALIQKVTSNDASKLVDGKAQYSCLPNNEGGIVDDLIIYKIADNHYMLVVNASNIEKDWNWISSHNDLGVDMQNLSDSYSLLAIQGPKAAEAMQSLTSIDLVNMPYYSFQIGEFAGLKDVTVSATGYTGSGGFEIYFKNEDAEAIWNKIFEAGKPFGIKPIGLAARDTLRLEMGFCLYGNDINDTTSPLEAGLGWITKFDKEFTNSANLKKQKEEGVARKLVAFEMQERAVPRHDYEIVDASGNVIGIVTSGTMSPSMNIGIGLGYVPTSFSTVDSDIFIRIRKNDVLAKVVKLPFYKK.

The protein belongs to the GcvT family. The glycine cleavage system is composed of four proteins: P, T, L and H.

It catalyses the reaction N(6)-[(R)-S(8)-aminomethyldihydrolipoyl]-L-lysyl-[protein] + (6S)-5,6,7,8-tetrahydrofolate = N(6)-[(R)-dihydrolipoyl]-L-lysyl-[protein] + (6R)-5,10-methylene-5,6,7,8-tetrahydrofolate + NH4(+). In terms of biological role, the glycine cleavage system catalyzes the degradation of glycine. This is Aminomethyltransferase from Flavobacterium psychrophilum (strain ATCC 49511 / DSM 21280 / CIP 103535 / JIP02/86).